A 397-amino-acid chain; its full sequence is Methyltransferase/ribosomally synthesized type I borosin cyclic peptide precursor mroMa1 (397 aa).

A methyltransferase domain region spans residues 1–246 (MALKKPGSLT…TTSTFYVPPR (246 aa)). Residues Arg-70, Tyr-74, and Tyr-96 contribute to the active site. S-adenosyl-L-methionine is bound by residues Tyr-96, His-98, Val-101, Ala-128, Gln-170, Gly-208, Ser-239, and Thr-240. The clasp domain stretch occupies residues 247-365 (TPAPIDPKAV…GPIFVVMRQL (119 aa)). The tract at residues 366-388 (PSAIASGQEPSQEEIARADDATA) is precursor leader. Residues Ile-391 and Ile-392 each carry the N-methylisoleucine modification. Tyr-393 carries the N-methyltyrosine modification. At Ile-394 the chain carries N-methylisoleucine. Val-395 carries the post-translational modification N-methylvaline.

It in the N-terminal section; belongs to the precorrin methyltransferase family. Homodimer. In terms of processing, mroMA automethylates at Ile-391, Ile-392, Tyr-393, Ile-394 and Val-395 before being processed by the a prolyloligopeptidase which likely forms a peptidyl ester upon removal of the follower propeptide, which then undergoes macrocyclization with the N-terminus of the modified core peptide. Peptide backbone alpha-N-methylations change the physicochemical properties of amide bonds to provide structural constraints and other favorable characteristics including biological membrane permeability to peptides.

It functions in the pathway secondary metabolite biosynthesis. Its function is as follows. Fusion protein of the methyltransferase mroM1 and a type I borosin core peptide; part of the gene cluster that mediates the biosynthesis of a type I borosin, a highly methylated cyclic peptide with potent biological activities. Type I borosins derive from the C-terminus of the fusion protein, and it is the same protein that methylates its own C-terminus using S-adenosyl methionine (SAM). The C-terminus is subsequently cleaved off and macrocyclized by a prolyloligopeptidase to give the final product. The sequence is that of Methyltransferase/ribosomally synthesized type I borosin cyclic peptide precursor mroMa1 from Mycena rosella (Pink bonnet).